A 443-amino-acid polypeptide reads, in one-letter code: Glutamate-rich protein 1 (443 aa).

At Lys12 the chain carries N6-acetyllysine. Residues Gln15 to Thr333 form a disordered region. A compositionally biased stretch (basic and acidic residues) spans Val42 to Pro54. Residues Ser87 to Gly97 show a composition bias toward polar residues. 2 stretches are compositionally biased toward basic residues: residues Pro109–Lys124 and Lys159–Ala176. Positions Ala205 to Val226 are enriched in acidic residues. A phosphoserine mark is found at Ser238 and Ser254. Residues Gly250 to Val266 are compositionally biased toward acidic residues. Thr277 bears the Phosphothreonine mark. Positions Asp281–Glu296 are enriched in basic and acidic residues. Over residues Asp297 to Ile332 the composition is skewed to acidic residues.

The sequence is that of Glutamate-rich protein 1 (ERICH1) from Homo sapiens (Human).